A 681-amino-acid polypeptide reads, in one-letter code: uncharacterized protein (681 aa).

Belongs to the protein kinase superfamily. ADCK protein kinase family.

This is an uncharacterized protein from Synechocystis sp. (strain ATCC 27184 / PCC 6803 / Kazusa).